We begin with the raw amino-acid sequence, 267 residues long: Nus factor SuhB (267 aa).

Mg(2+) contacts are provided by glutamate 67, aspartate 84, and leucine 86. A substrate-binding site is contributed by glutamate 67. Substrate is bound by residues 86-89, arginine 183, and aspartate 212; that span reads LDGT.

It belongs to the inositol monophosphatase superfamily. Homodimer. The rRNA transcription and antitermination complex (rrnTAC) consists of RNA polymerase (RNAP), NusA, NusB, NusE (rpsJ), NusG, SubB, ribosomal protein S4, DNA and precursor rRNA; S4 is more flexible than other subunits. The cofactor is Mg(2+).

The protein resides in the cytoplasm. The enzyme catalyses a myo-inositol phosphate + H2O = myo-inositol + phosphate. Part of the processive rRNA transcription and antitermination complex (rrnTAC). The complex forms an RNA-chaperone ring around the RNA exit tunnel of RNA polymerase (RNAP). It supports rapid transcription and antitermination of rRNA operons, cotranscriptional rRNA folding, and annealing of distal rRNA regions to allow correct ribosome biogenesis. This subunit may play a central role in organizing the structure. The chain is Nus factor SuhB from Vibrio cholerae serotype O1 (strain ATCC 39315 / El Tor Inaba N16961).